The primary structure comprises 171 residues: Adenine phosphoribosyltransferase (171 aa).

It belongs to the purine/pyrimidine phosphoribosyltransferase family. In terms of assembly, homodimer.

Its subcellular location is the cytoplasm. It catalyses the reaction AMP + diphosphate = 5-phospho-alpha-D-ribose 1-diphosphate + adenine. Its pathway is purine metabolism; AMP biosynthesis via salvage pathway; AMP from adenine: step 1/1. Its function is as follows. Catalyzes a salvage reaction resulting in the formation of AMP, that is energically less costly than de novo synthesis. The sequence is that of Adenine phosphoribosyltransferase from Pelotomaculum thermopropionicum (strain DSM 13744 / JCM 10971 / SI).